A 470-amino-acid chain; its full sequence is MPLALYDTWSRTVRPFTPIRAGQVGMYGCGPTVYDDAHIGNLRTYVFEDLLRRVLERNGYAVRHVVNITDVGHLTSDADEGEDKMEKGSRRTGESAWAIARRYTEAFVRDWHALNLLEPTIWCRATDHIAEQIAFIETLDRAGYVYRTDDGLYFDTSRQDDYGYLARLDRAGLQAGKRVALGGKRSITDFALWKFSPADVQRQMEWDSPWGRGFPGWHIECSAMSAKYLGTLFDIHCGGEDHIAVHHSNEIAQTRAAHGTQLANYWMHGHFLTLDVHTKMSKSSGDFVRLQTLQRRGVDPLAYRYLCLTAHYRSKLHFTWESLDAAQTALNRLRHLYIGWPDGGRVDADFAARFDAEVNEDLNLPRALAVLWDLVRSNLPPATLKATVDSFDMVLGLGLREWRPVAVDVPEHVRALLGERARARAEKDWAQADRIREALSAEGWRVEDTPEGQRLFGMAMGASEPDVPPQ.

A Zn(2+)-binding site is contributed by Cys29. A 'HIGH' region motif is present at residues 31-41 (PTVYDDAHIGN). Zn(2+) is bound by residues Cys221, His246, and Glu250. Residues 279 to 283 (KMSKS) carry the 'KMSKS' region motif. Position 282 (Lys282) interacts with ATP.

Belongs to the class-I aminoacyl-tRNA synthetase family. As to quaternary structure, monomer. Zn(2+) is required as a cofactor.

Its subcellular location is the cytoplasm. The catalysed reaction is tRNA(Cys) + L-cysteine + ATP = L-cysteinyl-tRNA(Cys) + AMP + diphosphate. The chain is Cysteine--tRNA ligase 1 from Burkholderia lata (strain ATCC 17760 / DSM 23089 / LMG 22485 / NCIMB 9086 / R18194 / 383).